The chain runs to 101 residues: NADH-quinone oxidoreductase subunit K (101 aa).

Helical transmembrane passes span 4-24 (LAHY…GIFL), 30-50 (IIIL…FVAF), and 61-81 (IFVF…LAIL).

Belongs to the complex I subunit 4L family. In terms of assembly, NDH-1 is composed of 14 different subunits. Subunits NuoA, H, J, K, L, M, N constitute the membrane sector of the complex.

Its subcellular location is the cell inner membrane. It catalyses the reaction a quinone + NADH + 5 H(+)(in) = a quinol + NAD(+) + 4 H(+)(out). Its function is as follows. NDH-1 shuttles electrons from NADH, via FMN and iron-sulfur (Fe-S) centers, to quinones in the respiratory chain. The immediate electron acceptor for the enzyme in this species is believed to be ubiquinone. Couples the redox reaction to proton translocation (for every two electrons transferred, four hydrogen ions are translocated across the cytoplasmic membrane), and thus conserves the redox energy in a proton gradient. This Paraburkholderia xenovorans (strain LB400) protein is NADH-quinone oxidoreductase subunit K.